The sequence spans 1016 residues: S-layer protein A (1016 aa).

The N-terminal stretch at 1 to 30 is a signal peptide; the sequence is MDLSTKKVISAGLVFIYALSLAMLVPMFLA.

It belongs to the Sulfolobales SlaA family. As to quaternary structure, the mushroom-shaped unit cells of the Sulfolobales' S-layers may consist of three SlaB subunits and six SlaA subunits.

It is found in the secreted. It localises to the cell wall. Its subcellular location is the S-layer. S-layer large protein. May form the highly ordered outer sheath. In Acidianus ambivalens (Desulfurolobus ambivalens), this protein is S-layer protein A.